The sequence spans 152 residues: 3-dehydroquinate dehydratase (152 aa).

Catalysis depends on Tyr25, which acts as the Proton acceptor. 3 residues coordinate substrate: Asn76, His82, and Asp89. His102 (proton donor) is an active-site residue. Substrate is bound by residues 103-104 (LS) and Arg113.

It belongs to the type-II 3-dehydroquinase family. As to quaternary structure, homododecamer.

The catalysed reaction is 3-dehydroquinate = 3-dehydroshikimate + H2O. The protein operates within metabolic intermediate biosynthesis; chorismate biosynthesis; chorismate from D-erythrose 4-phosphate and phosphoenolpyruvate: step 3/7. Catalyzes a trans-dehydration via an enolate intermediate. In Gloeothece citriformis (strain PCC 7424) (Cyanothece sp. (strain PCC 7424)), this protein is 3-dehydroquinate dehydratase.